The following is a 248-amino-acid chain: Adenosylcobinamide-GDP ribazoletransferase (248 aa).

Helical transmembrane passes span 24 to 44 (EINL…IGAW), 70 to 90 (IIIT…GLFS), 106 to 126 (VGAN…SLFL), 134 to 154 (IGWL…LLFA), 157 to 177 (TYAG…WWPV), 188 to 210 (LGLF…TIIY), and 228 to 248 (AGGQ…WGLI).

It belongs to the CobS family. The cofactor is Mg(2+).

It is found in the cell membrane. The enzyme catalyses alpha-ribazole + adenosylcob(III)inamide-GDP = adenosylcob(III)alamin + GMP + H(+). It carries out the reaction alpha-ribazole 5'-phosphate + adenosylcob(III)inamide-GDP = adenosylcob(III)alamin 5'-phosphate + GMP + H(+). The protein operates within cofactor biosynthesis; adenosylcobalamin biosynthesis; adenosylcobalamin from cob(II)yrinate a,c-diamide: step 7/7. In terms of biological role, joins adenosylcobinamide-GDP and alpha-ribazole to generate adenosylcobalamin (Ado-cobalamin). Also synthesizes adenosylcobalamin 5'-phosphate from adenosylcobinamide-GDP and alpha-ribazole 5'-phosphate. This is Adenosylcobinamide-GDP ribazoletransferase from Listeria monocytogenes serotype 4b (strain CLIP80459).